A 364-amino-acid chain; its full sequence is Dihydroorotase (364 aa).

Zn(2+) contacts are provided by His-14, His-16, Lys-98, His-137, His-180, and Asp-258. Lys-98 carries the post-translational modification N6-carboxylysine.

This sequence belongs to the metallo-dependent hydrolases superfamily. DHOase family. Class II DHOase subfamily. The cofactor is Zn(2+).

It carries out the reaction (S)-dihydroorotate + H2O = N-carbamoyl-L-aspartate + H(+). Its pathway is pyrimidine metabolism; UMP biosynthesis via de novo pathway; (S)-dihydroorotate from bicarbonate: step 3/3. Its function is as follows. Catalyzes the conversion of ureidosuccinic acid (USA) to dihydroorotate, the third step of the de novo pyrimidine biosynthetic pathway. The protein is Dihydroorotase (URA4) of Saccharomyces cerevisiae (strain ATCC 204508 / S288c) (Baker's yeast).